The primary structure comprises 252 residues: 3-dehydroquinate dehydratase (252 aa).

3-dehydroquinate contacts are provided by residues serine 21, 46–48 (EWR), and arginine 82. Catalysis depends on histidine 143, which acts as the Proton donor/acceptor. Residue lysine 170 is the Schiff-base intermediate with substrate of the active site. Residues arginine 213, serine 232, and glutamine 236 each coordinate 3-dehydroquinate.

Belongs to the type-I 3-dehydroquinase family. In terms of assembly, homodimer.

The catalysed reaction is 3-dehydroquinate = 3-dehydroshikimate + H2O. It functions in the pathway metabolic intermediate biosynthesis; chorismate biosynthesis; chorismate from D-erythrose 4-phosphate and phosphoenolpyruvate: step 3/7. Involved in the third step of the chorismate pathway, which leads to the biosynthesis of aromatic amino acids. Catalyzes the cis-dehydration of 3-dehydroquinate (DHQ) and introduces the first double bond of the aromatic ring to yield 3-dehydroshikimate. The sequence is that of 3-dehydroquinate dehydratase from Escherichia coli O139:H28 (strain E24377A / ETEC).